We begin with the raw amino-acid sequence, 304 residues long: Oxygen-dependent coproporphyrinogen-III oxidase (304 aa).

Serine 94 contributes to the substrate binding site. Positions 98 and 108 each coordinate a divalent metal cation. Histidine 108 (proton donor) is an active-site residue. A substrate-binding site is contributed by 110–112 (NVR). A divalent metal cation is bound by residues histidine 147 and histidine 177. The important for dimerization stretch occupies residues 242 to 277 (YVEFNLVWDRGTLFGLQSGGRTESVLMSMPPLARWQ). A substrate-binding site is contributed by 260 to 262 (GGR).

This sequence belongs to the aerobic coproporphyrinogen-III oxidase family. In terms of assembly, homodimer. Requires a divalent metal cation as cofactor.

It localises to the cytoplasm. It carries out the reaction coproporphyrinogen III + O2 + 2 H(+) = protoporphyrinogen IX + 2 CO2 + 2 H2O. It participates in porphyrin-containing compound metabolism; protoporphyrin-IX biosynthesis; protoporphyrinogen-IX from coproporphyrinogen-III (O2 route): step 1/1. Functionally, involved in the heme biosynthesis. Catalyzes the aerobic oxidative decarboxylation of propionate groups of rings A and B of coproporphyrinogen-III to yield the vinyl groups in protoporphyrinogen-IX. The sequence is that of Oxygen-dependent coproporphyrinogen-III oxidase from Sodalis glossinidius (strain morsitans).